The chain runs to 602 residues: DNA mismatch repair protein MutL (602 aa).

The tract at residues K337–G367 is disordered. Residues G342–Q352 are compositionally biased toward polar residues. Basic and acidic residues predominate over residues D353–G367.

Belongs to the DNA mismatch repair MutL/HexB family.

This protein is involved in the repair of mismatches in DNA. It is required for dam-dependent methyl-directed DNA mismatch repair. May act as a 'molecular matchmaker', a protein that promotes the formation of a stable complex between two or more DNA-binding proteins in an ATP-dependent manner without itself being part of a final effector complex. This chain is DNA mismatch repair protein MutL, found in Kosmotoga olearia (strain ATCC BAA-1733 / DSM 21960 / TBF 19.5.1).